Consider the following 57-residue polypeptide: Large ribosomal subunit protein bL32 (57 aa).

It belongs to the bacterial ribosomal protein bL32 family.

The protein is Large ribosomal subunit protein bL32 (rpmF) of Halalkalibacterium halodurans (strain ATCC BAA-125 / DSM 18197 / FERM 7344 / JCM 9153 / C-125) (Bacillus halodurans).